Reading from the N-terminus, the 119-residue chain is Protein phosphatase EYA4 (119 aa).

Belongs to the HAD-like hydrolase superfamily. EYA family. Requires Mg(2+) as cofactor.

The protein resides in the cytoplasm. Its subcellular location is the nucleus. It carries out the reaction O-phospho-L-tyrosyl-[protein] + H2O = L-tyrosyl-[protein] + phosphate. Functionally, tyrosine phosphatase that specifically dephosphorylates 'Tyr-142' of histone H2AX (H2AXY142ph). 'Tyr-142' phosphorylation of histone H2AX plays a central role in DNA repair and acts as a mark that distinguishes between apoptotic and repair responses to genotoxic stress. Promotes efficient DNA repair by dephosphorylating H2AX, promoting the recruitment of DNA repair complexes containing MDC1. Its function as histone phosphatase probably explains its role in transcription regulation during organogenesis. May be involved in development of the eye. The protein is Protein phosphatase EYA4 (eya4) of Takifugu rubripes (Japanese pufferfish).